A 765-amino-acid chain; its full sequence is LPS-assembly protein LptD (765 aa).

An N-terminal signal peptide occupies residues 1-18; sequence MQIRYFLALSLLPQLVLA.

The protein belongs to the LptD family. As to quaternary structure, component of the lipopolysaccharide transport and assembly complex. Interacts with LptE and LptA.

Its subcellular location is the cell outer membrane. Together with LptE, is involved in the assembly of lipopolysaccharide (LPS) at the surface of the outer membrane. This Shewanella sp. (strain MR-4) protein is LPS-assembly protein LptD.